We begin with the raw amino-acid sequence, 984 residues long: Detocs histidine-protein kinase DtcA (984 aa).

His645 is modified (phosphohistidine; by autocatalysis).

Autophosphorylated.

It catalyses the reaction ATP + protein L-histidine = ADP + protein N-phospho-L-histidine.. In terms of biological role, sensor-kinase member of the two-component regulatory system Detocs that confers resistance to bacteriophage. When the system (DtcA-DtcB-DtcC) is expressed in a susceptible E.coli (strain MG1655) it confers resistance to bacteriophages T2, T4, T5, T6 and SECphi27. Detocs inhibits T5 infection leading to growth arrest but not complete cell lysis, during SECphi27 infection leads to cell lysis. DtcA (this subunit) probably autophosphorylates upon sensing viral infection, and subsequently transfers the phosphate signal to DtcC which activates it, leading to an antiviral defense; DtcB may scavenge phosphorylation signals from accidental activation of DtcA. In Vibrio alginolyticus, this protein is Detocs histidine-protein kinase DtcA.